The following is a 100-amino-acid chain: Urease subunit gamma (100 aa).

This sequence belongs to the urease gamma subunit family. Heterotrimer of UreA (gamma), UreB (beta) and UreC (alpha) subunits. Three heterotrimers associate to form the active enzyme.

The protein localises to the cytoplasm. The enzyme catalyses urea + 2 H2O + H(+) = hydrogencarbonate + 2 NH4(+). It functions in the pathway nitrogen metabolism; urea degradation; CO(2) and NH(3) from urea (urease route): step 1/1. The chain is Urease subunit gamma from Ectopseudomonas mendocina (strain ymp) (Pseudomonas mendocina).